Reading from the N-terminus, the 163-residue chain is Cyclic pyranopterin monophosphate synthase (163 aa).

Residues 75-77 (LCH) and 113-114 (ME) each bind substrate. D128 is a catalytic residue.

The protein belongs to the MoaC family. As to quaternary structure, homohexamer; trimer of dimers.

It catalyses the reaction (8S)-3',8-cyclo-7,8-dihydroguanosine 5'-triphosphate = cyclic pyranopterin phosphate + diphosphate. It participates in cofactor biosynthesis; molybdopterin biosynthesis. Catalyzes the conversion of (8S)-3',8-cyclo-7,8-dihydroguanosine 5'-triphosphate to cyclic pyranopterin monophosphate (cPMP). The chain is Cyclic pyranopterin monophosphate synthase from Jannaschia sp. (strain CCS1).